Here is a 148-residue protein sequence, read N- to C-terminus: Large ribosomal subunit protein bL9 (148 aa).

This sequence belongs to the bacterial ribosomal protein bL9 family.

Its function is as follows. Binds to the 23S rRNA. This Listeria welshimeri serovar 6b (strain ATCC 35897 / DSM 20650 / CCUG 15529 / CIP 8149 / NCTC 11857 / SLCC 5334 / V8) protein is Large ribosomal subunit protein bL9.